Consider the following 185-residue polypeptide: Ribosome-recycling factor (185 aa).

The protein belongs to the RRF family.

The protein localises to the cytoplasm. Its function is as follows. Responsible for the release of ribosomes from messenger RNA at the termination of protein biosynthesis. May increase the efficiency of translation by recycling ribosomes from one round of translation to another. The chain is Ribosome-recycling factor from Carboxydothermus hydrogenoformans (strain ATCC BAA-161 / DSM 6008 / Z-2901).